The chain runs to 179 residues: Large ribosomal subunit protein uL6 (179 aa).

This sequence belongs to the universal ribosomal protein uL6 family. As to quaternary structure, part of the 50S ribosomal subunit.

Functionally, this protein binds to the 23S rRNA, and is important in its secondary structure. It is located near the subunit interface in the base of the L7/L12 stalk, and near the tRNA binding site of the peptidyltransferase center. In Herpetosiphon aurantiacus (strain ATCC 23779 / DSM 785 / 114-95), this protein is Large ribosomal subunit protein uL6.